Here is a 331-residue protein sequence, read N- to C-terminus: Putative ankyrin repeat protein RBE_0261 (331 aa).

One copy of the ANK repeat lies at 94–159 (QGENVIHKCV…KAKNTLLNIV (66 aa)).

The protein is Putative ankyrin repeat protein RBE_0261 of Rickettsia bellii (strain RML369-C).